A 200-amino-acid polypeptide reads, in one-letter code: Ribosomal RNA large subunit methyltransferase E (200 aa).

Positions 51, 53, 71, 90, and 112 each coordinate S-adenosyl-L-methionine. Catalysis depends on lysine 151, which acts as the Proton acceptor.

The protein belongs to the class I-like SAM-binding methyltransferase superfamily. RNA methyltransferase RlmE family.

The protein resides in the cytoplasm. It catalyses the reaction uridine(2552) in 23S rRNA + S-adenosyl-L-methionine = 2'-O-methyluridine(2552) in 23S rRNA + S-adenosyl-L-homocysteine + H(+). Specifically methylates the uridine in position 2552 of 23S rRNA at the 2'-O position of the ribose in the fully assembled 50S ribosomal subunit. The protein is Ribosomal RNA large subunit methyltransferase E of Treponema pallidum (strain Nichols).